A 157-amino-acid polypeptide reads, in one-letter code: Small ribosomal subunit protein uS9 (157 aa).

Belongs to the universal ribosomal protein uS9 family.

The sequence is that of Small ribosomal subunit protein uS9 from Caulobacter sp. (strain K31).